Consider the following 2971-residue polypeptide: uncharacterized protein (2971 aa).

The segment at 929 to 964 (SANFSNGPEESSLSTRLHIQKKRKAKKQRLETRRQK) is disordered. Polar residues predominate over residues 936–945 (PEESSLSTRL). Basic residues predominate over residues 946 to 955 (HIQKKRKAKK).

Its subcellular location is the plastid. It localises to the chloroplast. This is an uncharacterized protein from Chlamydomonas reinhardtii (Chlamydomonas smithii).